Consider the following 490-residue polypeptide: Betaine aldehyde dehydrogenase (490 aa).

Isoleucine 27 and aspartate 93 together coordinate K(+). 150–152 (GAW) serves as a coordination point for NAD(+). Lysine 162 serves as the catalytic Charge relay system. Residue 176–179 (KPSE) participates in NAD(+) binding. Position 180 (valine 180) interacts with K(+). 230–233 (GTDT) contributes to the NAD(+) binding site. Leucine 246 is a K(+) binding site. The active-site Proton acceptor is the glutamate 252. Glycine 254, cysteine 286, and glutamate 387 together coordinate NAD(+). Residue cysteine 286 is the Nucleophile of the active site. A Cysteine sulfenic acid (-SOH) modification is found at cysteine 286. Residues lysine 457 and glycine 460 each contribute to the K(+) site. The active-site Charge relay system is the glutamate 464.

It belongs to the aldehyde dehydrogenase family. In terms of assembly, dimer of dimers. K(+) serves as cofactor.

It catalyses the reaction betaine aldehyde + NAD(+) + H2O = glycine betaine + NADH + 2 H(+). Its pathway is amine and polyamine biosynthesis; betaine biosynthesis via choline pathway; betaine from betaine aldehyde: step 1/1. Involved in the biosynthesis of the osmoprotectant glycine betaine. Catalyzes the irreversible oxidation of betaine aldehyde to the corresponding acid. In Pseudomonas fluorescens (strain Pf0-1), this protein is Betaine aldehyde dehydrogenase.